Here is a 311-residue protein sequence, read N- to C-terminus: Probable cell division protein WhiA (311 aa).

The H-T-H motif DNA-binding region spans 274–308 (SLKELGEMIPSGAISKSGINHRIRKINEFAEKLRE).

The protein belongs to the WhiA family.

Involved in cell division and chromosome segregation. This Enterococcus faecalis (strain ATCC 700802 / V583) protein is Probable cell division protein WhiA.